Consider the following 56-residue polypeptide: Large ribosomal subunit protein eL24 (56 aa).

Positions 6, 9, 32, and 36 each coordinate Zn(2+). A C4-type zinc finger spans residues 6 to 36; the sequence is CSFCNTRITPGTGKLYAKKDGTVYYFCSSKC.

Belongs to the eukaryotic ribosomal protein eL24 family. As to quaternary structure, part of the 50S ribosomal subunit. Forms a cluster with proteins L3 and L14. Requires Zn(2+) as cofactor.

Binds to the 23S rRNA. This chain is Large ribosomal subunit protein eL24, found in Methanothrix thermoacetophila (strain DSM 6194 / JCM 14653 / NBRC 101360 / PT) (Methanosaeta thermophila).